We begin with the raw amino-acid sequence, 666 residues long: Probable potassium transport system protein Kup (666 aa).

A run of 12 helical transmembrane segments spans residues Phe-53–Leu-73, Val-89–Val-109, Leu-144–Thr-164, Pro-181–Val-201, Ala-212–Ile-232, Ala-247–Leu-267, Trp-291–Leu-311, Leu-324–Ala-344, Ile-381–Phe-401, Tyr-411–Trp-431, Ala-441–Leu-461, and Leu-463–Thr-483.

It belongs to the HAK/KUP transporter (TC 2.A.72) family.

The protein resides in the cell inner membrane. It catalyses the reaction K(+)(in) + H(+)(in) = K(+)(out) + H(+)(out). In terms of biological role, transport of potassium into the cell. Likely operates as a K(+):H(+) symporter. This Nitrobacter hamburgensis (strain DSM 10229 / NCIMB 13809 / X14) protein is Probable potassium transport system protein Kup.